Reading from the N-terminus, the 78-residue chain is Large ribosomal subunit protein bL28 (78 aa).

A disordered region spans residues methionine 1–threonine 25.

Belongs to the bacterial ribosomal protein bL28 family.

This is Large ribosomal subunit protein bL28 from Aliivibrio salmonicida (strain LFI1238) (Vibrio salmonicida (strain LFI1238)).